The sequence spans 147 residues: Testis-expressed protein 29 (147 aa).

Residues 1–57 (MRYAPEFKKSPSHLLKKFAVCDIPLYDICDYNVSRDRCKELGCCFYKGICYEKAVPS) lie on the Extracellular side of the membrane. A helical transmembrane segment spans residues 58–78 (YVQVFSALIVIIAGAFVITII). Residues 79–147 (YRVIQESRRE…IVTEEEETED (69 aa)) are Cytoplasmic-facing. A disordered region spans residues 86–147 (RREKEVPTEA…IVTEEEETED (62 aa)). The span at 99–108 (AKSSVQVETQ) shows a compositional bias: polar residues. A compositionally biased stretch (low complexity) spans 109 to 120 (PPSSAGAGSKAP). A compositionally biased stretch (basic and acidic residues) spans 125-135 (PQSKESGREDA).

It is found in the membrane. The chain is Testis-expressed protein 29 (TEX29) from Bos taurus (Bovine).